The primary structure comprises 217 residues: Ribosomal RNA small subunit methyltransferase G (217 aa).

S-adenosyl-L-methionine contacts are provided by residues glycine 79, leucine 84, 130–131, and arginine 148; that span reads IE.

The protein belongs to the methyltransferase superfamily. RNA methyltransferase RsmG family.

The protein localises to the cytoplasm. The enzyme catalyses guanosine(527) in 16S rRNA + S-adenosyl-L-methionine = N(7)-methylguanosine(527) in 16S rRNA + S-adenosyl-L-homocysteine. Functionally, specifically methylates the N7 position of guanine in position 527 of 16S rRNA. The polypeptide is Ribosomal RNA small subunit methyltransferase G (Desulfotalea psychrophila (strain LSv54 / DSM 12343)).